Reading from the N-terminus, the 726-residue chain is Sensory/regulatory protein RpfC (726 aa).

5 helical membrane passes run 23–40 (NLIR…LGWR), 52–72 (TWLI…AILL), 95–115 (IMAI…WVTI), 128–148 (AATA…PYWK), and 152–172 (YLSW…DSLL). One can recognise a Histidine kinase domain in the interval 195–417 (NMSHEFRTPL…VFWFELPMAI (223 aa)). A Phosphohistidine; by autocatalysis modification is found at histidine 198. The Response regulatory domain occupies 463–581 (RMLVADDHEA…KLLDTLADLA (119 aa)). Aspartate 512 is subject to 4-aspartylphosphate. Residues 618 to 711 (GEEFERQFVR…KAGKDALDAR (94 aa)) enclose the HPt domain. Histidine 657 bears the Phosphohistidine mark.

At low DSF concentrations, interacts with RpfF. In terms of processing, autophosphorylated. Activation may require a sequential transfer of a phosphate group from a His in the primary transmitter domain, to an Asp in the receiver domain and to a His in the secondary transmitter domain.

It localises to the cell inner membrane. It carries out the reaction ATP + protein L-histidine = ADP + protein N-phospho-L-histidine.. Binding of DSF to the sensor region causes allosteric change, which facilitates RpfC autophosphorylation. In terms of biological role, hybrid sensor kinase that regulates diverse biological functions through two distinct molecular mechanisms. At low cell density, the extracellular concentration of the diffusible signaling factor (DSF) is below a threshold, and unphosphorylated RpfC is involved in the negative regulation of DSF synthesis, via direct interaction with the DSF synthase RpfF. Interaction prevents synthesis of DSF, which remains at a basal level. This activity does not involve the phosphorelay mechanism and is not dependent on RpfG. Is also member of the two-component regulatory system RpfG/RpfC, which is involved in the perception and response to DSF, which is essential for cell-cell signaling. At high cell density, the level of extracellular DSF increases and binding of DSF to the sensor region of RpfC causes autophosphorylation of RpfC, which results in the release of RpfF and the activation of RpfG via a four-step phosphorelay. Activation of RpfG leads to the positive regulation of biofilm dispersal and the production of virulence factors. This chain is Sensory/regulatory protein RpfC (rpfC), found in Xanthomonas campestris pv. campestris (strain ATCC 33913 / DSM 3586 / NCPPB 528 / LMG 568 / P 25).